The primary structure comprises 243 residues: Triosephosphate isomerase (243 aa).

Residue 9–11 (NWK) participates in substrate binding. The active-site Electrophile is H96. Catalysis depends on E165, which acts as the Proton acceptor. Substrate contacts are provided by residues G171, S204, and 225–226 (GG).

It belongs to the triosephosphate isomerase family. As to quaternary structure, homodimer.

The protein localises to the cytoplasm. It carries out the reaction D-glyceraldehyde 3-phosphate = dihydroxyacetone phosphate. The protein operates within carbohydrate biosynthesis; gluconeogenesis. Its pathway is carbohydrate degradation; glycolysis; D-glyceraldehyde 3-phosphate from glycerone phosphate: step 1/1. Involved in the gluconeogenesis. Catalyzes stereospecifically the conversion of dihydroxyacetone phosphate (DHAP) to D-glyceraldehyde-3-phosphate (G3P). The protein is Triosephosphate isomerase of Synechococcus sp. (strain CC9311).